The primary structure comprises 139 residues: Large ribosomal subunit protein bL17 (139 aa).

Residues 117-139 (DRDPEAKGQDSGPVEIKDESEEG) form a disordered region.

Belongs to the bacterial ribosomal protein bL17 family. Part of the 50S ribosomal subunit. Contacts protein L32.

The sequence is that of Large ribosomal subunit protein bL17 from Rhodospirillum centenum (strain ATCC 51521 / SW).